A 212-amino-acid polypeptide reads, in one-letter code: uncharacterized protein (212 aa).

S-adenosyl-L-methionine is bound by residues Gly-53, Glu-74, and Asp-96.

The protein belongs to the methyltransferase superfamily. YrrT family.

Could be a S-adenosyl-L-methionine-dependent methyltransferase. This is an uncharacterized protein from Anoxybacillus flavithermus (strain DSM 21510 / WK1).